The sequence spans 146 residues: Transcriptional repressor NrdR (146 aa).

The segment at 3-34 (CPFCQNPDTKVIDTRISDDGHSIRRRRVCPKC) is a zinc-finger region. One can recognise an ATP-cone domain in the interval 46–136 (LLVTKRSGGV…VYQNFAGLED (91 aa)).

Belongs to the NrdR family. The cofactor is Zn(2+).

Negatively regulates transcription of bacterial ribonucleotide reductase nrd genes and operons by binding to NrdR-boxes. The polypeptide is Transcriptional repressor NrdR (Bifidobacterium longum (strain NCC 2705)).